The chain runs to 302 residues: Protein FdhE homolog (302 aa).

This sequence belongs to the FdhE family.

Its subcellular location is the cytoplasm. Necessary for formate dehydrogenase activity. The protein is Protein FdhE homolog of Shewanella sp. (strain MR-4).